Here is a 364-residue protein sequence, read N- to C-terminus: CCA-adding enzyme (364 aa).

ATP is bound by residues Gly19 and Arg22. Residues Gly19 and Arg22 each coordinate CTP. Asp32 and Asp34 together coordinate Mg(2+). 3 residues coordinate ATP: Arg102, Arg148, and Arg151. Arg102, Arg148, and Arg151 together coordinate CTP.

This sequence belongs to the tRNA nucleotidyltransferase/poly(A) polymerase family. Bacterial CCA-adding enzyme type 2 subfamily. Mg(2+) is required as a cofactor.

It catalyses the reaction a tRNA precursor + 2 CTP + ATP = a tRNA with a 3' CCA end + 3 diphosphate. The enzyme catalyses a tRNA with a 3' CCA end + 2 CTP + ATP = a tRNA with a 3' CCACCA end + 3 diphosphate. Catalyzes the addition and repair of the essential 3'-terminal CCA sequence in tRNAs without using a nucleic acid template. Adds these three nucleotides in the order of C, C, and A to the tRNA nucleotide-73, using CTP and ATP as substrates and producing inorganic pyrophosphate. tRNA 3'-terminal CCA addition is required both for tRNA processing and repair. Also involved in tRNA surveillance by mediating tandem CCA addition to generate a CCACCA at the 3' terminus of unstable tRNAs. While stable tRNAs receive only 3'-terminal CCA, unstable tRNAs are marked with CCACCA and rapidly degraded. In Bordetella pertussis (strain Tohama I / ATCC BAA-589 / NCTC 13251), this protein is CCA-adding enzyme.